A 269-amino-acid polypeptide reads, in one-letter code: uncharacterized protein (269 aa).

Residues 152–197 (RYFSKPAYRNAFKANTIRATTAYKKVFNDPSLGSTYPLEVPLGKMS) form the RPE1 insert domain.

This is an uncharacterized protein from Rickettsia prowazekii (strain Madrid E).